The sequence spans 258 residues: Acyl-[acyl-carrier-protein]--UDP-N-acetylglucosamine O-acyltransferase (258 aa).

This sequence belongs to the transferase hexapeptide repeat family. LpxA subfamily. As to quaternary structure, homotrimer.

The protein localises to the cytoplasm. The enzyme catalyses a (3R)-hydroxyacyl-[ACP] + UDP-N-acetyl-alpha-D-glucosamine = a UDP-3-O-[(3R)-3-hydroxyacyl]-N-acetyl-alpha-D-glucosamine + holo-[ACP]. It functions in the pathway glycolipid biosynthesis; lipid IV(A) biosynthesis; lipid IV(A) from (3R)-3-hydroxytetradecanoyl-[acyl-carrier-protein] and UDP-N-acetyl-alpha-D-glucosamine: step 1/6. Involved in the biosynthesis of lipid A, a phosphorylated glycolipid that anchors the lipopolysaccharide to the outer membrane of the cell. This is Acyl-[acyl-carrier-protein]--UDP-N-acetylglucosamine O-acyltransferase from Halorhodospira halophila (strain DSM 244 / SL1) (Ectothiorhodospira halophila (strain DSM 244 / SL1)).